The chain runs to 507 residues: Probable Xaa-Pro aminopeptidase HCBG_01484 (507 aa).

4 residues coordinate Mn(2+): aspartate 283, aspartate 294, glutamate 431, and glutamate 469.

This sequence belongs to the peptidase M24B family. The cofactor is Mn(2+).

It catalyses the reaction Release of any N-terminal amino acid, including proline, that is linked to proline, even from a dipeptide or tripeptide.. In terms of biological role, catalyzes the removal of a penultimate prolyl residue from the N-termini of peptides. The polypeptide is Probable Xaa-Pro aminopeptidase HCBG_01484 (Ajellomyces capsulatus (strain G186AR / H82 / ATCC MYA-2454 / RMSCC 2432) (Darling's disease fungus)).